Consider the following 302-residue polypeptide: Putative F-box protein At1g32420 (302 aa).

Residues 1-10 show a composition bias toward basic and acidic residues; it reads MKRGNEENNH. Residues 1–27 form a disordered region; that stretch reads MKRGNEENNHKTSSSSSTQRLSRRKIS. The F-box domain maps to 31–78; that stretch reads KSGNVNIPLDLTVEILKKLPAKSLLRFQCVSKQWLSIISSRRDFIDSI.

The sequence is that of Putative F-box protein At1g32420 from Arabidopsis thaliana (Mouse-ear cress).